The sequence spans 95 residues: MTSPVNVDVKLGVNKFNVDEEHPHIVVKADADKQALELLVKACPAGLYKKQDDGSVRFDYAGCLECGTCRILGLGSALEQWEYPRGTFGVEFRYG.

The protein belongs to the bacterial-type ferredoxin family. FixX subfamily.

In terms of biological role, could be part of an electron transfer system required for anaerobic carnitine reduction. Could be a 3Fe-4S cluster-containing protein. In Escherichia coli O157:H7, this protein is Ferredoxin-like protein FixX (fixX).